The sequence spans 56 residues: uncharacterized protein (56 aa).

The next 2 helical transmembrane spans lie at 6 to 26 (VILLAVMICLVSAITVFLLNG) and 29 to 49 (VDFLDIGGTIIGCFLGIFVVV).

The protein localises to the cell membrane. This is an uncharacterized protein from Bacillus subtilis (strain 168).